We begin with the raw amino-acid sequence, 275 residues long: LIM/homeobox protein Awh (275 aa).

LIM zinc-binding domains follow at residues 6-67 and 68-129; these read RSCA…NFGA and KCSK…TVEG. At Thr126 the chain carries Phosphothreonine. The segment at residues 148-207 is a DNA-binding region (homeobox); sequence TKRVRTTFTEEQLQVLQANFQIDSNPDGQDLERIASVTGLSKRVTQVWFQNSRARQKKHI. Residues 253–275 are disordered; it reads PTHESSMDELSQDSSVHCMPSEV.

First detected in neuroblasts in stage 9 embryos. Expressed in all 10 abdominal segments and in the labial segment during early embryogenesis. Expressed in the stage 14 developing epithelium. By embryonic stage 16, expression is refined to the abdominal histoblasts and salivary gland imaginal ring cells. Expressed in both larval and imaginal cells between the salivary gland and the salivary gland imaginal ring, in late third instar larvae. Also expressed in specific areas of the larval wing, leg and eye-antennal disks.

It localises to the nucleus. In terms of biological role, probable transcription factor. Required for the establishment of a subset of imaginal tissues: the abdominal histoblasts and the salivary gland imaginal rings. This Drosophila melanogaster (Fruit fly) protein is LIM/homeobox protein Awh.